We begin with the raw amino-acid sequence, 574 residues long: Bifunctional NADP phosphatase/NAD kinase (574 aa).

An NADP phosphatase region spans residues 1–297 (MVIMEGFKIA…KLIALFGNRW (297 aa)). Mg(2+)-binding residues include Glu-69, Asp-87, Ile-89, Asp-90, and Asp-243. The segment at 302 to 574 (VKFGIVVRED…NKLSRCLGIK (273 aa)) is NAD kinase. The active-site Proton acceptor is the Asp-362. Residues 362 to 363 (DG), Arg-367, 436 to 437 (NE), Lys-447, Arg-464, Asp-466, and 477 to 482 (TAYSLS) contribute to the NAD(+) site.

It in the N-terminal section; belongs to the inositol monophosphatase superfamily. This sequence in the C-terminal section; belongs to the NAD kinase family. In terms of assembly, homotetramer. It depends on Mg(2+) as a cofactor.

The protein resides in the cytoplasm. The catalysed reaction is NAD(+) + ATP = ADP + NADP(+) + H(+). It catalyses the reaction NADP(+) + H2O = phosphate + NAD(+). It carries out the reaction UTP + NAD(+) = UDP + NADP(+) + H(+). The enzyme catalyses 5-methyl-UTP + NAD(+) = 5-methyl-UDP + NADP(+) + H(+). The catalysed reaction is CTP + NAD(+) = CDP + NADP(+) + H(+). It catalyses the reaction GTP + NAD(+) = GDP + NADP(+) + H(+). It carries out the reaction dATP + NAD(+) = dADP + NADP(+) + H(+). The enzyme catalyses NADPH + H2O = phosphate + NADH. The catalysed reaction is adenosine 2'-phosphate + H2O = adenosine + phosphate. It catalyses the reaction beta-D-fructose 1,6-bisphosphate + H2O = beta-D-fructose 6-phosphate + phosphate. With respect to regulation, phosphatase activity is slightly inhibited by ADP, NADH and ATP, and moderately inhibited by NAD and 5'-AMP. Kinase activity is slightly inhibited by ADP and NADP. Involved in the regulation of the intracellular balance between NAD(H) and NADP(H), and is a key enzyme in the biosynthesis of NADP. Catalyzes the phosphorylation and dephosphorylation of NAD and NADP, respectively. Although it shows conflicting dual activities and is able to supply NADP, it seems that its physiological role is to prevent excess accumulation of NADP. Kinase can use ATP and other nucleoside triphosphates (UTP, TTP, CTP, GTP) as well as inorganic polyphosphate (poly(P)) as phosphoryl donors, however poly(P) is not considered to be the physiological phosphoryl donor. NAD is the preferred substrate for the kinase, but NADH can also be used as phosphoryl acceptor. Phosphatase can use NADP or NADPH as phosphoryl donor, but NADP is the preferred substrate. Phosphatase also has an activity toward the terminal phosphate group at C-2 of adenosine in 2'-AMP and toward the phosphate group at C-1 of fructose 1,6-bisphosphate, but not toward inositol 1-phosphate. In Methanocaldococcus jannaschii (strain ATCC 43067 / DSM 2661 / JAL-1 / JCM 10045 / NBRC 100440) (Methanococcus jannaschii), this protein is Bifunctional NADP phosphatase/NAD kinase.